The chain runs to 212 residues: Ribonuclease HII (212 aa).

Residues 20-209 (TCVVGVDEVG…VHNILYQEAS (190 aa)) enclose the RNase H type-2 domain. Residues aspartate 26, glutamate 27, and aspartate 117 each contribute to the a divalent metal cation site.

The protein belongs to the RNase HII family. It depends on Mn(2+) as a cofactor. Requires Mg(2+) as cofactor.

Its subcellular location is the cytoplasm. The enzyme catalyses Endonucleolytic cleavage to 5'-phosphomonoester.. In terms of biological role, endonuclease that specifically degrades the RNA of RNA-DNA hybrids. The protein is Ribonuclease HII of Cereibacter sphaeroides (strain ATCC 17029 / ATH 2.4.9) (Rhodobacter sphaeroides).